The primary structure comprises 154 residues: Large ribosomal subunit protein uL13 (154 aa).

Belongs to the universal ribosomal protein uL13 family. In terms of assembly, part of the 50S ribosomal subunit.

This protein is one of the early assembly proteins of the 50S ribosomal subunit, although it is not seen to bind rRNA by itself. It is important during the early stages of 50S assembly. This Rhodopseudomonas palustris (strain ATCC BAA-98 / CGA009) protein is Large ribosomal subunit protein uL13.